The following is a 187-amino-acid chain: Photosystem I assembly protein Ycf4 (187 aa).

The next 2 helical transmembrane spans lie at 25-45 and 69-89; these read YLWA…GISS and MSFY…TVIW.

It belongs to the Ycf4 family.

The protein localises to the cellular thylakoid membrane. Its function is as follows. Seems to be required for the assembly of the photosystem I complex. In Trichodesmium erythraeum (strain IMS101), this protein is Photosystem I assembly protein Ycf4.